The following is an 860-amino-acid chain: Leucine--tRNA ligase (860 aa).

The 'HIGH' region motif lies at 42–52; the sequence is PYPSGRLHMGH. The short motif at 619 to 623 is the 'KMSKS' region element; that stretch reads KMSKS. Lys622 contributes to the ATP binding site.

This sequence belongs to the class-I aminoacyl-tRNA synthetase family.

The protein resides in the cytoplasm. The enzyme catalyses tRNA(Leu) + L-leucine + ATP = L-leucyl-tRNA(Leu) + AMP + diphosphate. This chain is Leucine--tRNA ligase, found in Salmonella paratyphi A (strain ATCC 9150 / SARB42).